The sequence spans 535 residues: Serum response factor-binding protein 1 (535 aa).

2 coiled-coil regions span residues 5-27 (LNLNNEVVKLRKDVKKVKVLIIR) and 107-177 (LKQK…EKCK). 6 stretches are compositionally biased toward basic and acidic residues: residues 128-151 (AAEGEREREKDEPEQVTKIKETKK), 159-191 (KNTEEIKSAKEHVKEEKCKNLLEDSDKGTEKAL), 205-325 (AENK…ERPV), 361-376 (DKEKEYFDDSTEERFY), 406-432 (SDKDGSKQKEEKVPPTKEKAQTSEVQK), and 460-472 (TKRETNFRQERNK). Disordered stretches follow at residues 128 to 435 (AAEG…KEIP) and 453 to 535 (TKPK…VFDD).

It is found in the cytoplasm. The protein localises to the perinuclear region. May be involved in regulating transcriptional activation of cardiac genes during the aging process. May play a role in biosynthesis and/or processing of SLC2A4 in adipose cells. The protein is Serum response factor-binding protein 1 of Xenopus tropicalis (Western clawed frog).